A 527-amino-acid chain; its full sequence is Peptide chain release factor 3 (527 aa).

Residues 9–277 enclose the tr-type G domain; it reads AKRRTFAIIS…CIVDWAPQPL (269 aa). GTP-binding positions include 18–25, 86–90, and 140–143; these read SHPDAGKT, DTPGH, and NKLD.

This sequence belongs to the TRAFAC class translation factor GTPase superfamily. Classic translation factor GTPase family. PrfC subfamily.

The protein resides in the cytoplasm. Increases the formation of ribosomal termination complexes and stimulates activities of RF-1 and RF-2. It binds guanine nucleotides and has strong preference for UGA stop codons. It may interact directly with the ribosome. The stimulation of RF-1 and RF-2 is significantly reduced by GTP and GDP, but not by GMP. The protein is Peptide chain release factor 3 of Pseudomonas aeruginosa (strain LESB58).